Here is a 454-residue protein sequence, read N- to C-terminus: Maintenance of mitochondrial morphology protein 1 (454 aa).

Over 1-117 (MESNYTGMDG…SFSSWSFAQG (117 aa)) the chain is Lumenal. The chain crosses the membrane as a helical span at residues 118–138 (LIVGQVSVVLVLIFFIKFFIF). The Cytoplasmic portion of the chain corresponds to 139-454 (SDSSTKTNPN…ESEPGRETHY (316 aa)). The segment at 144 to 164 (KTNPNPAKNSSSTNSLSGLSS) is disordered. Low complexity predominate over residues 153–164 (SSSTNSLSGLSS). The SMP-LTD domain maps to 215–427 (PAESLDWFNV…EPRFQFIKLP (213 aa)). A 1,2-diacyl-sn-glycero-3-phosphate is bound by residues arginine 253, tryptophan 411, arginine 415, tryptophan 430, arginine 432, and serine 433. The tract at residues 434-454 (KNTREGKADVDESEPGRETHY) is disordered. Basic and acidic residues predominate over residues 435–454 (NTREGKADVDESEPGRETHY).

The protein belongs to the MMM1 family. In terms of assembly, homodimer. Component of the ER-mitochondria encounter structure (ERMES) or MDM complex, composed of MMM1, MDM10, MDM12 and MDM34. An MMM1 homodimer associates with one molecule of MDM12 on each side in a pairwise head-to-tail manner, and the SMP-LTD domains of MMM1 and MDM12 generate a continuous hydrophobic tunnel for phospholipid trafficking.

Its subcellular location is the endoplasmic reticulum membrane. Component of the ERMES/MDM complex, which serves as a molecular tether to connect the endoplasmic reticulum (ER) and mitochondria. Components of this complex are involved in the control of mitochondrial shape and protein biogenesis, and function in nonvesicular lipid trafficking between the ER and mitochondria. Preferentially binds to glycerophospholipids such as phosphatidylcholoine (PC), phosphatidic acid (PA), phosphatidylglycerol (PG), and phosphatidylserine (PS), but not to phosphatidylethanolamine (PE). The MDM12-MMM1 subcomplex functions in the major beta-barrel assembly pathway that is responsible for biogenesis of all outer membrane beta-barrel proteins, and acts in a late step after the SAM complex. The MDM10-MDM12-MMM1 subcomplex further acts in the TOM40-specific pathway after the action of the MDM12-MMM1 complex. Essential for establishing and maintaining the structure of mitochondria and maintenance of mtDNA nucleoids. In Zygosaccharomyces rouxii (strain ATCC 2623 / CBS 732 / NBRC 1130 / NCYC 568 / NRRL Y-229), this protein is Maintenance of mitochondrial morphology protein 1.